The sequence spans 363 residues: Probable dual-specificity RNA methyltransferase RlmN (363 aa).

E106 acts as the Proton acceptor in catalysis. The Radical SAM core domain maps to 112–345 (HEYGNSVCVT…VTIRREQGHD (234 aa)). C119 and C350 are disulfide-bonded. Positions 126, 130, and 133 each coordinate [4Fe-4S] cluster. S-adenosyl-L-methionine contacts are provided by residues 176–177 (GE), S208, 231–233 (SLH), and N307. C350 (S-methylcysteine intermediate) is an active-site residue.

This sequence belongs to the radical SAM superfamily. RlmN family. [4Fe-4S] cluster is required as a cofactor.

Its subcellular location is the cytoplasm. The catalysed reaction is adenosine(2503) in 23S rRNA + 2 reduced [2Fe-2S]-[ferredoxin] + 2 S-adenosyl-L-methionine = 2-methyladenosine(2503) in 23S rRNA + 5'-deoxyadenosine + L-methionine + 2 oxidized [2Fe-2S]-[ferredoxin] + S-adenosyl-L-homocysteine. It carries out the reaction adenosine(37) in tRNA + 2 reduced [2Fe-2S]-[ferredoxin] + 2 S-adenosyl-L-methionine = 2-methyladenosine(37) in tRNA + 5'-deoxyadenosine + L-methionine + 2 oxidized [2Fe-2S]-[ferredoxin] + S-adenosyl-L-homocysteine. In terms of biological role, specifically methylates position 2 of adenine 2503 in 23S rRNA and position 2 of adenine 37 in tRNAs. This chain is Probable dual-specificity RNA methyltransferase RlmN, found in Bacillus subtilis (strain 168).